Consider the following 108-residue polypeptide: Phosphoribosyl-AMP cyclohydrolase (108 aa).

Aspartate 78 contributes to the Mg(2+) binding site. Zn(2+) is bound at residue cysteine 79. Mg(2+)-binding residues include aspartate 80 and aspartate 82. Zn(2+)-binding residues include cysteine 95 and cysteine 102.

Belongs to the PRA-CH family. In terms of assembly, homodimer. It depends on Mg(2+) as a cofactor. The cofactor is Zn(2+).

It localises to the cytoplasm. It catalyses the reaction 1-(5-phospho-beta-D-ribosyl)-5'-AMP + H2O = 1-(5-phospho-beta-D-ribosyl)-5-[(5-phospho-beta-D-ribosylamino)methylideneamino]imidazole-4-carboxamide. It functions in the pathway amino-acid biosynthesis; L-histidine biosynthesis; L-histidine from 5-phospho-alpha-D-ribose 1-diphosphate: step 3/9. Functionally, catalyzes the hydrolysis of the adenine ring of phosphoribosyl-AMP. The sequence is that of Phosphoribosyl-AMP cyclohydrolase from Nitrosopumilus maritimus (strain SCM1).